A 343-amino-acid polypeptide reads, in one-letter code: Cysteine proteinase 1 (343 aa).

The signal sequence occupies residues 1–18 (MKVILLFVLAVFTVFVSS). Positions 19 to 117 (RGIPLEEQSQ…DYLDDEFINS (99 aa)) are cleaved as a propeptide — activation peptide. Cystine bridges form between Cys139–Cys190, Cys173–Cys224, and Cys279–Cys332. Cys142 is a catalytic residue. Residues His286 and Asn311 contribute to the active site.

Belongs to the peptidase C1 family. Post-translationally, phosphoglycosylated, contains GlcNAc-alpha-1-P-Ser residues.

It is found in the lysosome. In terms of biological role, cysteine proteinases 1 and 2 are believed to participate in the breakdown of protein during differentiation of Dictyostelium as a response to starvation. The chain is Cysteine proteinase 1 (cprA) from Dictyostelium discoideum (Social amoeba).